The sequence spans 537 residues: CTP synthase (537 aa).

The amidoligase domain stretch occupies residues 1 to 267 (MTKYIFVTGG…DQIVCDHLKL (267 aa)). Serine 13 is a binding site for CTP. Serine 13 provides a ligand contact to UTP. Residue 14-19 (SIGKGI) coordinates ATP. Tyrosine 54 is a binding site for L-glutamine. Aspartate 71 serves as a coordination point for ATP. Mg(2+)-binding residues include aspartate 71 and glutamate 141. CTP-binding positions include 148–150 (DIE), 188–193 (KTKPTQ), and lysine 224. UTP is bound by residues 188–193 (KTKPTQ) and lysine 224. 240-242 (RDV) contributes to the ATP binding site. In terms of domain architecture, Glutamine amidotransferase type-1 spans 292–535 (RIALVGKYVE…VTAAVKNKNQ (244 aa)). Glycine 354 lines the L-glutamine pocket. Cysteine 381 serves as the catalytic Nucleophile; for glutamine hydrolysis. L-glutamine-binding positions include 382 to 385 (LGMQ), glutamate 405, and arginine 463. Active-site residues include histidine 508 and glutamate 510.

The protein belongs to the CTP synthase family. Homotetramer.

It carries out the reaction UTP + L-glutamine + ATP + H2O = CTP + L-glutamate + ADP + phosphate + 2 H(+). It catalyses the reaction L-glutamine + H2O = L-glutamate + NH4(+). The enzyme catalyses UTP + NH4(+) + ATP = CTP + ADP + phosphate + 2 H(+). Its pathway is pyrimidine metabolism; CTP biosynthesis via de novo pathway; CTP from UDP: step 2/2. With respect to regulation, allosterically activated by GTP, when glutamine is the substrate; GTP has no effect on the reaction when ammonia is the substrate. The allosteric effector GTP functions by stabilizing the protein conformation that binds the tetrahedral intermediate(s) formed during glutamine hydrolysis. Inhibited by the product CTP, via allosteric rather than competitive inhibition. Functionally, catalyzes the ATP-dependent amination of UTP to CTP with either L-glutamine or ammonia as the source of nitrogen. Regulates intracellular CTP levels through interactions with the four ribonucleotide triphosphates. The polypeptide is CTP synthase (Streptococcus equi subsp. zooepidemicus (strain H70)).